Consider the following 314-residue polypeptide: Malate dehydrogenase (314 aa).

Residues 11–16 (GSGNIG) and Asp-35 contribute to the NAD(+) site. Substrate contacts are provided by Arg-84 and Arg-90. NAD(+)-binding positions include Asn-97 and 120-122 (ITN). Substrate-binding residues include Asn-122 and Arg-153. The Proton acceptor role is filled by His-177.

It belongs to the LDH/MDH superfamily. MDH type 3 family.

It carries out the reaction (S)-malate + NAD(+) = oxaloacetate + NADH + H(+). Its function is as follows. Catalyzes the reversible oxidation of malate to oxaloacetate. The protein is Malate dehydrogenase of Rickettsia felis (strain ATCC VR-1525 / URRWXCal2) (Rickettsia azadi).